Here is a 720-residue protein sequence, read N- to C-terminus: MPELLIELFSEEIPARMQARAAQDLQKLVTNGLVEAGITYAGARAYATPRRLTLVVSDMLAASAPVREERKGPKADAPEKAIEGFLRSTGLGREQLETRETPKGDVLFAVIEKPGRPAAEIVAEVLETTIRNFPWPKSMRWGSSSLRWVRPLHRILCLIRDEEGAEIVPLTVDGITAGDVTEGHRFLAPGEIKVHGFEDYETKLRRAKVILDAEERAEHIWADATNQAFAQGLEVVEDRRLLSEVAGLVEFPVPLMGEIDADFLDLPPEVLQTSMKEHQKFFSVRDLKSGKIVRFVTVANTETTDHGATILAGNRKVLSARLADAKFFWENDLRIARAGMQPWREALENVTFHNKLGSQAARIARIADLAATLAPQVGADPDAARTAAELAKADLSSEMVFEFPELQGLMGRYYAEAAGHPAEIAAVAQDHYQPLGPSDAVPTAPLSIAVALADKLDTLTGFWAIDEKPTGSKDPFALRRAALGVIRIVLENGLRLPLINSVKHHNSENTSRPLFSALVAHAKTDQERADGSKSMSDWKALVARSQDDLLSFFHDRLKVFLRDEGIRHDIIDACLAMEGNDDLLLLVNRARALSETLKTEDGENLLQGFKRANNILTQAEEADGVEYSYGADPKFAETDEERALFAALDTAEAVIDPALEAEDFAAATAAMASLRAPLDAFFEAVQVNAENQILRRNRLNLLSRIRATCLKLADLTRIEG.

This sequence belongs to the class-II aminoacyl-tRNA synthetase family. Tetramer of two alpha and two beta subunits.

Its subcellular location is the cytoplasm. The catalysed reaction is tRNA(Gly) + glycine + ATP = glycyl-tRNA(Gly) + AMP + diphosphate. This Dinoroseobacter shibae (strain DSM 16493 / NCIMB 14021 / DFL 12) protein is Glycine--tRNA ligase beta subunit.